Here is a 470-residue protein sequence, read N- to C-terminus: Diaminobutyrate--2-oxoglutarate aminotransferase (470 aa).

Residue K304 is modified to N6-(pyridoxal phosphate)lysine.

Belongs to the class-III pyridoxal-phosphate-dependent aminotransferase family. Pyridoxal 5'-phosphate serves as cofactor.

It catalyses the reaction L-2,4-diaminobutanoate + 2-oxoglutarate = L-aspartate 4-semialdehyde + L-glutamate. It participates in siderophore biosynthesis; rhizobactin biosynthesis. In Rhizobium meliloti (strain 1021) (Ensifer meliloti), this protein is Diaminobutyrate--2-oxoglutarate aminotransferase (rhbA).